The following is a 347-amino-acid chain: 3-isopropylmalate dehydrogenase (347 aa).

4 residues coordinate substrate: Arg94, Arg104, Arg128, and Asp219. Asp219, Asp243, and Asp247 together coordinate Mg(2+). Residue 279–291 (GSAPDIAGQGKAD) coordinates NAD(+).

Belongs to the isocitrate and isopropylmalate dehydrogenases family. LeuB type 2 subfamily. Homodimer. Requires Mg(2+) as cofactor. Mn(2+) serves as cofactor.

The protein localises to the cytoplasm. The enzyme catalyses (2R,3S)-3-isopropylmalate + NAD(+) = 4-methyl-2-oxopentanoate + CO2 + NADH. It functions in the pathway amino-acid biosynthesis; L-leucine biosynthesis; L-leucine from 3-methyl-2-oxobutanoate: step 3/4. Its function is as follows. Catalyzes the oxidation of 3-carboxy-2-hydroxy-4-methylpentanoate (3-isopropylmalate) to 3-carboxy-4-methyl-2-oxopentanoate. The product decarboxylates to 4-methyl-2 oxopentanoate. The polypeptide is 3-isopropylmalate dehydrogenase (Streptomyces coelicolor (strain ATCC BAA-471 / A3(2) / M145)).